The primary structure comprises 465 residues: MNQDTICAIATAQGGAIGSIRVSGPEAITITGRIFTPAKSGKLLSEQKPYTLTFGRIYNGEEMIDEVLVSLFRAPHSYTGEDSTEITCHGSSYILQQVMQLLIKNGCRMAQPGEYTQRAFLNGKMDLSQAEAVADLIASSSAATHRLALSQMRGGFSKELTTLREKLLNFTSMIELELDFSEEDVEFADRSALRRLADEIEEVIARLANSFSVGNVIKNGVPVAIIGETNAGKSTLLNVLLNEDKAIVSDIHGTTRDVIEDTVNIGGITFRFIDTAGIRETSDTIESLGIERTFQKLDQAEIVLWMIDSADAISQLTLLSDKILPRCEHKQLILVFNKVELINETQKNELASQFSEHIGSEIESIFISAKQRLHTDELQQRLVAAAHLPTVTQNDVIVTNVRHYEALTRALDAIHRVQEGLDANISGDFLSQDIRECIFHLSDIAGEVTNDMVLQNIFAHFCIGK.

3 residues coordinate (6S)-5-formyl-5,6,7,8-tetrahydrofolate: Arg21, Glu85, and Lys124. Positions 220–387 (GVPVAIIGET…LQQRLVAAAH (168 aa)) constitute a TrmE-type G domain. Asn230 provides a ligand contact to K(+). GTP contacts are provided by residues 230–235 (NAGKST), 249–255 (SDIHGTT), and 274–277 (DTAG). Ser234 contacts Mg(2+). K(+) contacts are provided by Ser249, Ile251, and Thr254. Position 255 (Thr255) interacts with Mg(2+). Residue Lys465 participates in (6S)-5-formyl-5,6,7,8-tetrahydrofolate binding.

It belongs to the TRAFAC class TrmE-Era-EngA-EngB-Septin-like GTPase superfamily. TrmE GTPase family. As to quaternary structure, homodimer. Heterotetramer of two MnmE and two MnmG subunits. Requires K(+) as cofactor.

It localises to the cytoplasm. Its function is as follows. Exhibits a very high intrinsic GTPase hydrolysis rate. Involved in the addition of a carboxymethylaminomethyl (cmnm) group at the wobble position (U34) of certain tRNAs, forming tRNA-cmnm(5)s(2)U34. This is tRNA modification GTPase MnmE from Bacteroides fragilis (strain ATCC 25285 / DSM 2151 / CCUG 4856 / JCM 11019 / LMG 10263 / NCTC 9343 / Onslow / VPI 2553 / EN-2).